Here is a 342-residue protein sequence, read N- to C-terminus: S-adenosylmethionine:tRNA ribosyltransferase-isomerase (342 aa).

Belongs to the QueA family. Monomer.

It is found in the cytoplasm. The enzyme catalyses 7-aminomethyl-7-carbaguanosine(34) in tRNA + S-adenosyl-L-methionine = epoxyqueuosine(34) in tRNA + adenine + L-methionine + 2 H(+). It participates in tRNA modification; tRNA-queuosine biosynthesis. Functionally, transfers and isomerizes the ribose moiety from AdoMet to the 7-aminomethyl group of 7-deazaguanine (preQ1-tRNA) to give epoxyqueuosine (oQ-tRNA). This Geobacillus kaustophilus (strain HTA426) protein is S-adenosylmethionine:tRNA ribosyltransferase-isomerase.